Reading from the N-terminus, the 474-residue chain is Cyclin-dependent kinase 18 (474 aa).

Phosphoserine is present on residues Ser-14, Ser-74, Ser-89, Ser-98, Ser-117, and Ser-132. The disordered stretch occupies residues 44-93 (NLQLGPLGRDPPQECSTFSPTDSGEEPGQLSPGVQFQRRQNQRRFSMEDV). In terms of domain architecture, Protein kinase spans 144–425 (YVKLDKLGEG…AEAALSHSYF (282 aa)). ATP-binding positions include 150–158 (LGEGTYATV) and Lys-173. Asp-265 (proton acceptor) is an active-site residue. Phosphoserine is present on residues Ser-440 and Ser-443.

This sequence belongs to the protein kinase superfamily. CMGC Ser/Thr protein kinase family. CDC2/CDKX subfamily. Isoform 2 expression is limited to several subcortical nuclei of the basal gangli and the spinal cord. Isoform 1 is widely expressed.

It carries out the reaction L-seryl-[protein] + ATP = O-phospho-L-seryl-[protein] + ADP + H(+). The enzyme catalyses L-threonyl-[protein] + ATP = O-phospho-L-threonyl-[protein] + ADP + H(+). In terms of biological role, may play a role in signal transduction cascades in terminally differentiated cells. The protein is Cyclin-dependent kinase 18 (CDK18) of Homo sapiens (Human).